Consider the following 71-residue polypeptide: Small ribosomal subunit protein bS21 (71 aa).

Residues 43–71 are disordered; sequence TERKRAKASAVKRHAKKLARENARRTRLY. A compositionally biased stretch (basic residues) spans 46–59; sequence KRAKASAVKRHAKK. A compositionally biased stretch (basic and acidic residues) spans 60-71; sequence LARENARRTRLY.

This sequence belongs to the bacterial ribosomal protein bS21 family.

This chain is Small ribosomal subunit protein bS21, found in Edwardsiella ictaluri (strain 93-146).